The primary structure comprises 93 residues: uncharacterized protein (93 aa).

3 consecutive transmembrane segments (helical) span residues 15-35 (MAGL…VMLV), 48-68 (ILAI…IYQI), and 72-92 (LSYA…AGVH).

The protein localises to the cell membrane. This is an uncharacterized protein from Bacillus subtilis (strain 168).